The following is a 297-amino-acid chain: N-acetylmuramic acid 6-phosphate etherase (297 aa).

In terms of domain architecture, SIS spans 56-219 (AIEAFNKGGR…STISMIGIGK (164 aa)). The active-site Proton donor is the E84. The active site involves E115.

It belongs to the GCKR-like family. MurNAc-6-P etherase subfamily. In terms of assembly, homodimer.

The catalysed reaction is N-acetyl-D-muramate 6-phosphate + H2O = N-acetyl-D-glucosamine 6-phosphate + (R)-lactate. It functions in the pathway amino-sugar metabolism; N-acetylmuramate degradation. Functionally, specifically catalyzes the cleavage of the D-lactyl ether substituent of MurNAc 6-phosphate, producing GlcNAc 6-phosphate and D-lactate. The chain is N-acetylmuramic acid 6-phosphate etherase from Lactococcus lactis subsp. lactis (strain IL1403) (Streptococcus lactis).